The chain runs to 230 residues: MVKLVFARHGESEWNKANLFTGWADVDLSEKGTQQAIDAGKLIKEAGIKFDQAYTSVLKRAIKTTNLALEASDQLWVPVEKSWRLNERHYGGLTGKNKAEAAEQFGDEQVHIWRRSYDVLPPNMDRDDEHSAHTDRRYASLDDSVIPDAENLKVTLERALPFWEDKIAPALKDGKNVFVGAHGNSIRALVKHIKGLSDDEIMDVEIPNFPPLVFEFDEKLNVVSEYYLGK.

Substrate-binding positions include 8–15, 21–22, Arg60, 87–90, Lys98, 114–115, and 183–184; these read RHGESEWN, TG, ERHY, RR, and GN. His9 serves as the catalytic Tele-phosphohistidine intermediate. The active-site Proton donor/acceptor is Glu87.

It belongs to the phosphoglycerate mutase family. BPG-dependent PGAM subfamily.

It carries out the reaction (2R)-2-phosphoglycerate = (2R)-3-phosphoglycerate. Its pathway is carbohydrate degradation; glycolysis; pyruvate from D-glyceraldehyde 3-phosphate: step 3/5. Catalyzes the interconversion of 2-phosphoglycerate and 3-phosphoglycerate. This chain is 2,3-bisphosphoglycerate-dependent phosphoglycerate mutase, found in Streptococcus pneumoniae (strain P1031).